We begin with the raw amino-acid sequence, 266 residues long: Beta-lactamase OXA-10 (266 aa).

The signal sequence occupies residues 1–19; sequence MKTFAAYVIIACLSSTALA. A disulfide bond links Cys-44 and Cys-51. Catalysis depends on Ser-67, which acts as the Acyl-ester intermediate. N6-carboxylysine is present on Lys-70. A beta-lactam-binding residues include Ser-115, Thr-206, Phe-208, and Arg-250.

It belongs to the class-D beta-lactamase family. Dimer.

It localises to the periplasm. The enzyme catalyses a beta-lactam + H2O = a substituted beta-amino acid. Activated, with respect to most beta-lactam substrates, in the presence of 0.05 M sodium bicarbonate. Functionally, class D beta-lactamase which confers resistance to the beta-lactam antibiotics, including penicillin, carbenicillin and oxacillin, and also some cephalosporins. Confers weak resistance to some carbapenems, in E.coli strain C600Z1. Acts via hydrolysis of the beta-lactam ring. Has penicillin- and cephalosporin-hydrolyzing activities. This Pseudomonas aeruginosa protein is Beta-lactamase OXA-10.